Reading from the N-terminus, the 141-residue chain is Hemoglobin subunit alpha-A (141 aa).

A Globin domain is found at 1–141 (VLSAADKTNV…VGAVLTAKYR (141 aa)). Histidine 58 is a binding site for O2. Histidine 87 contributes to the heme b binding site.

This sequence belongs to the globin family. In terms of assembly, heterotetramer of two alpha chains and two beta chains. Red blood cells.

Involved in oxygen transport from the lung to the various peripheral tissues. The sequence is that of Hemoglobin subunit alpha-A (HBAA) from Cygnus olor (Mute swan).